Reading from the N-terminus, the 314-residue chain is tRNA uridine(34) hydroxylase (314 aa).

In terms of domain architecture, Rhodanese spans 135 to 229 (SDPDTIVIDT…YLEEVPEEES (95 aa)). Cys-189 serves as the catalytic Cysteine persulfide intermediate.

Belongs to the TrhO family.

It carries out the reaction uridine(34) in tRNA + AH2 + O2 = 5-hydroxyuridine(34) in tRNA + A + H2O. In terms of biological role, catalyzes oxygen-dependent 5-hydroxyuridine (ho5U) modification at position 34 in tRNAs. In Agrobacterium fabrum (strain C58 / ATCC 33970) (Agrobacterium tumefaciens (strain C58)), this protein is tRNA uridine(34) hydroxylase.